The sequence spans 289 residues: Formamidopyrimidine-DNA glycosylase (289 aa).

Pro2 acts as the Schiff-base intermediate with DNA in catalysis. Catalysis depends on Glu3, which acts as the Proton donor. The Proton donor; for beta-elimination activity role is filled by Lys60. Positions 94, 126, and 167 each coordinate DNA. The FPG-type zinc finger occupies 252–287 (QVYGKPAGTPCPRCGTGLARIRIAGRSSVFCPRCQP). Catalysis depends on Arg277, which acts as the Proton donor; for delta-elimination activity.

Belongs to the FPG family. Monomer. It depends on Zn(2+) as a cofactor.

It catalyses the reaction Hydrolysis of DNA containing ring-opened 7-methylguanine residues, releasing 2,6-diamino-4-hydroxy-5-(N-methyl)formamidopyrimidine.. It carries out the reaction 2'-deoxyribonucleotide-(2'-deoxyribose 5'-phosphate)-2'-deoxyribonucleotide-DNA = a 3'-end 2'-deoxyribonucleotide-(2,3-dehydro-2,3-deoxyribose 5'-phosphate)-DNA + a 5'-end 5'-phospho-2'-deoxyribonucleoside-DNA + H(+). Its function is as follows. Involved in base excision repair of DNA damaged by oxidation or by mutagenic agents. Acts as a DNA glycosylase that recognizes and removes damaged bases. Has a preference for oxidized purines, such as 7,8-dihydro-8-oxoguanine (8-oxoG). Has AP (apurinic/apyrimidinic) lyase activity and introduces nicks in the DNA strand. Cleaves the DNA backbone by beta-delta elimination to generate a single-strand break at the site of the removed base with both 3'- and 5'-phosphates. The polypeptide is Formamidopyrimidine-DNA glycosylase (Thermomicrobium roseum (strain ATCC 27502 / DSM 5159 / P-2)).